A 124-amino-acid polypeptide reads, in one-letter code: MARIAGVDLPREKRVEIALTYIFGIGLSRSKQILRDTGVDPNKRVKDLTDDEVAKIRDYIDKNFKVEGELRAEIARNIKRLIDIRCYRGLRHLRGLPVRGQRTRTNARTRKGPRKTVGVMRKKS.

The disordered stretch occupies residues 99–124; sequence RGQRTRTNARTRKGPRKTVGVMRKKS. Basic residues predominate over residues 101–124; sequence QRTRTNARTRKGPRKTVGVMRKKS.

It belongs to the universal ribosomal protein uS13 family. As to quaternary structure, part of the 30S ribosomal subunit. Forms a loose heterodimer with protein S19. Forms two bridges to the 50S subunit in the 70S ribosome.

Its function is as follows. Located at the top of the head of the 30S subunit, it contacts several helices of the 16S rRNA. In the 70S ribosome it contacts the 23S rRNA (bridge B1a) and protein L5 of the 50S subunit (bridge B1b), connecting the 2 subunits; these bridges are implicated in subunit movement. Contacts the tRNAs in the A and P-sites. The polypeptide is Small ribosomal subunit protein uS13 (Caldicellulosiruptor bescii (strain ATCC BAA-1888 / DSM 6725 / KCTC 15123 / Z-1320) (Anaerocellum thermophilum)).